Consider the following 295-residue polypeptide: Ribosomal protein L11 methyltransferase (295 aa).

4 residues coordinate S-adenosyl-L-methionine: T145, G166, D188, and N230.

Belongs to the methyltransferase superfamily. PrmA family.

It is found in the cytoplasm. The enzyme catalyses L-lysyl-[protein] + 3 S-adenosyl-L-methionine = N(6),N(6),N(6)-trimethyl-L-lysyl-[protein] + 3 S-adenosyl-L-homocysteine + 3 H(+). Methylates ribosomal protein L11. In Pectobacterium atrosepticum (strain SCRI 1043 / ATCC BAA-672) (Erwinia carotovora subsp. atroseptica), this protein is Ribosomal protein L11 methyltransferase.